A 231-amino-acid polypeptide reads, in one-letter code: Putative histone H1.9 (231 aa).

The H15 domain occupies 113–177; it reads QKPSTSKVIL…GSAGSFTLGK (65 aa). Ser135 carries the phosphoserine modification. The segment at 177-214 is disordered; the sequence is KKQASKSKLKVKRQRQQRWRSGQRPFGQHRSLLGSKQG. The segment covering 179-194 has biased composition (basic residues); it reads QASKSKLKVKRQRQQR.

Belongs to the histone H1/H5 family. In terms of tissue distribution, expressed exclusively in the testis.

Its subcellular location is the nucleus. The protein localises to the chromosome. In terms of biological role, DNA-binding protein that may be implicated in chromatin remodeling and/or transcriptional regulation during spermiogenesis, the process of spermatid maturation into spermatozoa. In Homo sapiens (Human), this protein is Putative histone H1.9.